A 598-amino-acid polypeptide reads, in one-letter code: N-acetylmuramoyl-L-alanine amidase (598 aa).

Residues 1 to 31 (MSPGNWKTTMVVRGILLILYGLLLQPEPGTA) form the signal peptide. Disordered regions lie at residues 172–194 (SSAH…SPNV) and 212–233 (STGV…KAKS). Ser261 carries the phosphoserine modification. Asn353 carries an N-linked (GlcNAc...) asparagine glycan. The 127-residue stretch at 428–554 (FLYIHHTYVP…RQLVRTDCPG (127 aa)) folds into the N-acetylmuramoyl-L-alanine amidase domain. Zn(2+) is bound at residue His432. Cysteines 441 and 447 form a disulfide. The N-linked (GlcNAc...) asparagine glycan is linked to Asn507. The Zn(2+) site is built by His544 and Cys552.

Belongs to the N-acetylmuramoyl-L-alanine amidase 2 family. Requires Zn(2+) as cofactor.

Its subcellular location is the secreted. It localises to the membrane. It catalyses the reaction Hydrolyzes the link between N-acetylmuramoyl residues and L-amino acid residues in certain cell-wall glycopeptides.. In terms of biological role, may play a scavenger role by digesting biologically active peptidoglycan (PGN) into biologically inactive fragments. Has no direct bacteriolytic activity. The polypeptide is N-acetylmuramoyl-L-alanine amidase (PGLYRP2) (Sus scrofa (Pig)).